Here is a 185-residue protein sequence, read N- to C-terminus: Lactoylglutathione lyase (185 aa).

A disordered region spans residues 1–21 (MASEAKESPANNPGLSTVRDE). Residues 27–174 (IMQQTMFRVK…DGYWIEIFDL (148 aa)) enclose the VOC domain. Substrate-binding residues include glutamine 30 and arginine 34. Glutamine 30 is a binding site for Zn(2+). Position 96 (glutamate 96) interacts with Zn(2+). Residues asparagine 100, arginine 120, histidine 124, and 154 to 155 (KM) each bind substrate. A Zn(2+)-binding site is contributed by histidine 124. Zn(2+) is bound at residue glutamate 170. Glutamate 170 serves as the catalytic Proton donor/acceptor.

It belongs to the glyoxalase I family. It depends on Zn(2+) as a cofactor.

The catalysed reaction is (R)-S-lactoylglutathione = methylglyoxal + glutathione. It functions in the pathway secondary metabolite metabolism; methylglyoxal degradation; (R)-lactate from methylglyoxal: step 1/2. Catalyzes the conversion of hemimercaptal, formed from methylglyoxal and glutathione, to S-lactoylglutathione. This chain is Lactoylglutathione lyase (GLY I), found in Brassica juncea (Indian mustard).